The primary structure comprises 453 residues: Serine/threonine-protein phosphatase 2A 55 kDa regulatory subunit B delta isoform (453 aa).

WD repeat units follow at residues 32-71, 97-138, 181-219, and 230-270; these read AEAD…KSRP, EIEE…KRAE, AHTY…RSFN, and ELTE…LCDR. Phosphoserine is present on Ser-285. WD repeat units lie at residues 289 to 327, 344 to 385, and 420 to 452; these read EIIS…RPVE, ENDC…DVTL, and DFNK…QDKI. Residue Tyr-305 is modified to Phosphotyrosine. Thr-308 is subject to Phosphothreonine.

Belongs to the phosphatase 2A regulatory subunit B family. As to quaternary structure, PP2A consists of a common heterodimeric core enzyme, composed of a 36 kDa catalytic subunit (subunit C) and a 65 kDa constant regulatory subunit (PR65 or subunit A), that associates with a variety of regulatory subunits. Proteins that associate with the core dimer include three families of regulatory subunits B (the R2/B/PR55/B55, R3/B''/PR72/PR130/PR59 and R5/B'/B56 families), the 48 kDa variable regulatory subunit, viral proteins, and cell signaling molecules. Interacts with ENSA (when phosphorylated at 'Ser-67') and ARPP19 (when phosphorylated at 'Ser-62'), leading to inhibit PP2A activity. Interacts with IER5.

It localises to the cytoplasm. In terms of biological role, substrate-recognition subunit of protein phosphatase 2A (PP2A) that plays a key role in cell cycle by controlling mitosis entry and exit. Involved in chromosome clustering during late mitosis by mediating dephosphorylation of MKI67. The activity of PP2A complexes containing PPP2R2D (PR55-delta) fluctuate during the cell cycle: the activity is high in interphase and low in mitosis. This is Serine/threonine-protein phosphatase 2A 55 kDa regulatory subunit B delta isoform (PPP2R2D) from Homo sapiens (Human).